We begin with the raw amino-acid sequence, 173 residues long: ATP synthase subunit b (173 aa).

The chain crosses the membrane as a helical span at residues 12–32 (LDVNPGLVVWTLVTFLVVVLV).

It belongs to the ATPase B chain family. F-type ATPases have 2 components, F(1) - the catalytic core - and F(0) - the membrane proton channel. F(1) has five subunits: alpha(3), beta(3), gamma(1), delta(1), epsilon(1). F(0) has three main subunits: a(1), b(2) and c(10-14). The alpha and beta chains form an alternating ring which encloses part of the gamma chain. F(1) is attached to F(0) by a central stalk formed by the gamma and epsilon chains, while a peripheral stalk is formed by the delta and b chains.

Its subcellular location is the cell inner membrane. F(1)F(0) ATP synthase produces ATP from ADP in the presence of a proton or sodium gradient. F-type ATPases consist of two structural domains, F(1) containing the extramembraneous catalytic core and F(0) containing the membrane proton channel, linked together by a central stalk and a peripheral stalk. During catalysis, ATP synthesis in the catalytic domain of F(1) is coupled via a rotary mechanism of the central stalk subunits to proton translocation. Its function is as follows. Component of the F(0) channel, it forms part of the peripheral stalk, linking F(1) to F(0). The sequence is that of ATP synthase subunit b from Leptospira interrogans serogroup Icterohaemorrhagiae serovar copenhageni (strain Fiocruz L1-130).